The primary structure comprises 245 residues: 1-(5-phosphoribosyl)-5-[(5-phosphoribosylamino)methylideneamino] imidazole-4-carboxamide isomerase (245 aa).

D7 functions as the Proton acceptor in the catalytic mechanism. Catalysis depends on D129, which acts as the Proton donor.

Belongs to the HisA/HisF family.

Its subcellular location is the cytoplasm. The catalysed reaction is 1-(5-phospho-beta-D-ribosyl)-5-[(5-phospho-beta-D-ribosylamino)methylideneamino]imidazole-4-carboxamide = 5-[(5-phospho-1-deoxy-D-ribulos-1-ylimino)methylamino]-1-(5-phospho-beta-D-ribosyl)imidazole-4-carboxamide. The protein operates within amino-acid biosynthesis; L-histidine biosynthesis; L-histidine from 5-phospho-alpha-D-ribose 1-diphosphate: step 4/9. This Idiomarina loihiensis (strain ATCC BAA-735 / DSM 15497 / L2-TR) protein is 1-(5-phosphoribosyl)-5-[(5-phosphoribosylamino)methylideneamino] imidazole-4-carboxamide isomerase.